The primary structure comprises 1325 residues: uncharacterized protein (1325 aa).

Positions 1 to 27 are cleaved as a signal peptide; the sequence is MHTFTRKVKWPFMFTAIGLTFGIVAVA. Cysteine 28 carries the N-palmitoyl cysteine lipid modification. A lipid anchor (S-diacylglycerol cysteine) is attached at cysteine 28. Disordered stretches follow at residues 379-402 and 430-464; these read RAASSSSEGTIQLKTASDGGGTTQ and NTNANQTGGGGSGGGGGTSTGSSTGSSTETTTGNS. The segment covering 436 to 448 has biased composition (gly residues); it reads TGGGGSGGGGGTS. Residues 449–464 are compositionally biased toward low complexity; sequence TGSSTGSSTETTTGNS.

This sequence belongs to the MG307/MG309/MG338 family.

The protein localises to the cell membrane. This is an uncharacterized protein from Mycoplasma pneumoniae (strain ATCC 29342 / M129 / Subtype 1) (Mycoplasmoides pneumoniae).